The following is a 410-amino-acid chain: Serine hydroxymethyltransferase (410 aa).

(6S)-5,6,7,8-tetrahydrofolate-binding positions include leucine 119 and 123–125; that span reads GHL. An N6-(pyridoxal phosphate)lysine modification is found at lysine 228. 351–353 provides a ligand contact to (6S)-5,6,7,8-tetrahydrofolate; it reads SPF.

Belongs to the SHMT family. Homodimer. Pyridoxal 5'-phosphate serves as cofactor.

The protein localises to the cytoplasm. The catalysed reaction is (6R)-5,10-methylene-5,6,7,8-tetrahydrofolate + glycine + H2O = (6S)-5,6,7,8-tetrahydrofolate + L-serine. It functions in the pathway one-carbon metabolism; tetrahydrofolate interconversion. It participates in amino-acid biosynthesis; glycine biosynthesis; glycine from L-serine: step 1/1. In terms of biological role, catalyzes the reversible interconversion of serine and glycine with tetrahydrofolate (THF) serving as the one-carbon carrier. This reaction serves as the major source of one-carbon groups required for the biosynthesis of purines, thymidylate, methionine, and other important biomolecules. Also exhibits THF-independent aldolase activity toward beta-hydroxyamino acids, producing glycine and aldehydes, via a retro-aldol mechanism. In Clostridium perfringens (strain ATCC 13124 / DSM 756 / JCM 1290 / NCIMB 6125 / NCTC 8237 / Type A), this protein is Serine hydroxymethyltransferase.